Consider the following 78-residue polypeptide: MSLENDSLEITYLGKRYKISLNNTFSDEMKRTLKERFHNQELNALELLKDYLHESCQNEYLHNELQKLLEKISSCSIT.

This is an uncharacterized protein from Helicobacter pylori (strain J99 / ATCC 700824) (Campylobacter pylori J99).